We begin with the raw amino-acid sequence, 160 residues long: Endoribonuclease YbeY (160 aa).

His125, His129, and His135 together coordinate Zn(2+).

The protein belongs to the endoribonuclease YbeY family. Requires Zn(2+) as cofactor.

It is found in the cytoplasm. Single strand-specific metallo-endoribonuclease involved in late-stage 70S ribosome quality control and in maturation of the 3' terminus of the 16S rRNA. This Leuconostoc citreum (strain KM20) protein is Endoribonuclease YbeY.